Here is a 173-residue protein sequence, read N- to C-terminus: T-cell receptor beta-1 chain C region (173 aa).

The tract at residues 1–146 (EDLRNVTPPK…GVLSATILYE (146 aa)) is c region. An intrachain disulfide couples Cys-31 to Cys-71. Residues Asn-67 and Asn-116 are each glycosylated (N-linked (GlcNAc...) asparagine). The helical transmembrane segment at 146-167 (EILLGKATLYAVLVSTLVVMAM) threads the bilayer. At 168-173 (VKRKNS) the chain is on the cytoplasmic side.

Its subcellular location is the membrane. The protein is T-cell receptor beta-1 chain C region of Mus musculus (Mouse).